The following is a 352-amino-acid chain: Dihydroorotate dehydrogenase (quinone) (352 aa).

Residues 68–72 (AGFDK) and threonine 92 contribute to the FMN site. Lysine 72 is a binding site for substrate. 117–121 (NAMGF) is a substrate binding site. FMN-binding residues include asparagine 146 and asparagine 179. Asparagine 179 serves as a coordination point for substrate. The active-site Nucleophile is serine 182. Residue asparagine 184 coordinates substrate. Positions 215 and 243 each coordinate FMN. 244–245 (NT) lines the substrate pocket. FMN contacts are provided by residues glycine 263, glycine 292, and 313–314 (YS).

The protein belongs to the dihydroorotate dehydrogenase family. Type 2 subfamily. As to quaternary structure, monomer. The cofactor is FMN.

The protein localises to the cell membrane. It carries out the reaction (S)-dihydroorotate + a quinone = orotate + a quinol. Its pathway is pyrimidine metabolism; UMP biosynthesis via de novo pathway; orotate from (S)-dihydroorotate (quinone route): step 1/1. Functionally, catalyzes the conversion of dihydroorotate to orotate with quinone as electron acceptor. The protein is Dihydroorotate dehydrogenase (quinone) of Sulfurimonas denitrificans (strain ATCC 33889 / DSM 1251) (Thiomicrospira denitrificans (strain ATCC 33889 / DSM 1251)).